A 471-amino-acid chain; its full sequence is MLLPRHHDPIVAIATAPGRGAVGIVRVSGRGLGALIEAVCGRALQPRHAHYGPFLDAQGEAIDQGLALHFPAPHSYTGEEVLELQAHGGPVLLQLLLARCLEAAAQPDARSGLPRLRGLRVAEPGEFTERAFLNDKLDLAQAEAVADLIDASTEAAARSAGRALAGAFSQQVDTLRDRLIELRMLVEATLDFPEEEIDFLEKADARGRLARIAEALDAVLARAKQGALLREGLRVVLAGQPNVGKSSLLNALAGAELAIVTPIAGTTRDKVAETIQIEGVPLHVVDTAGLRAEDDARDEVERIGMQRSWGAIGEADAVIFLHDLTRAGDPGYDAAERDIEQRLPAGVHVLDVHNKADAAAAGAAALAPQALRLSARTGEGLDTLRRRLLQLAGWQAGSEGVFIARTRHLQALQATAEHLVRARQLADRADAALDLLAEELRLAHDALGAITGRYTPDELLGDIFSRFCIGK.

Residues R26, E83, and K136 each coordinate (6S)-5-formyl-5,6,7,8-tetrahydrofolate. The TrmE-type G domain occupies 232-393 (GLRVVLAGQP…LRRRLLQLAG (162 aa)). N242 is a binding site for K(+). Residues 242–247 (NVGKSS), 261–267 (TPIAGTT), 286–289 (DTAG), 354–357 (NKAD), and 374–376 (SAR) contribute to the GTP site. S246 contributes to the Mg(2+) binding site. Residues T261, I263, and T266 each contribute to the K(+) site. Position 267 (T267) interacts with Mg(2+). K471 contributes to the (6S)-5-formyl-5,6,7,8-tetrahydrofolate binding site.

The protein belongs to the TRAFAC class TrmE-Era-EngA-EngB-Septin-like GTPase superfamily. TrmE GTPase family. In terms of assembly, homodimer. Heterotetramer of two MnmE and two MnmG subunits. K(+) serves as cofactor.

The protein localises to the cytoplasm. Its function is as follows. Exhibits a very high intrinsic GTPase hydrolysis rate. Involved in the addition of a carboxymethylaminomethyl (cmnm) group at the wobble position (U34) of certain tRNAs, forming tRNA-cmnm(5)s(2)U34. The protein is tRNA modification GTPase MnmE of Methylibium petroleiphilum (strain ATCC BAA-1232 / LMG 22953 / PM1).